Consider the following 159-residue polypeptide: MADLFALTEEALAGMGIELVDVERAALGLLRVTIDREDGVRIEDCEQVSRQLSRVYEVENIDYKRLEVGSPGVDRPLRNEAEFRRFAGERIEIKLREAVDGRKVFTGILQEADTSADDKTVFGLEFEAKKDDIQVLSFTLDDIERAKLDPVLDFKGKKR.

Belongs to the RimP family.

The protein resides in the cytoplasm. Functionally, required for maturation of 30S ribosomal subunits. In Bordetella avium (strain 197N), this protein is Ribosome maturation factor RimP.